Reading from the N-terminus, the 508-residue chain is Histone acetyltransferase type B catalytic subunit (508 aa).

Interaction with histone H4 N-terminus regions lie at residues glutamate 44 to glutamate 46 and tyrosine 207 to tyrosine 209. Acetyl-CoA contacts are provided by residues phenylalanine 249 to isoleucine 251 and glutamine 256 to serine 262. The Proton donor/acceptor role is filled by glutamate 284. Disordered regions lie at residues serine 364–glutamate 399 and glutamine 461–alanine 508. Basic and acidic residues predominate over residues lysine 387–glutamate 399.

Belongs to the HAT1 family. In terms of assembly, component of the HAT-B complex composed of at least hat-1 and hat-2. The HAT-B complex binds to histone H4 tail.

It is found in the cytoplasm. The protein localises to the nucleus. It catalyses the reaction L-lysyl-[protein] + acetyl-CoA = N(6)-acetyl-L-lysyl-[protein] + CoA + H(+). Functionally, catalytic component of the histone acetylase B (HAT-B) complex. Acetylates 'Lys-12' of histone H4 which is required for telomeric silencing. Has intrinsic substrate specificity that modifies lysine in recognition sequence GXGKXG. Involved in DNA double-strand break repair. The sequence is that of Histone acetyltransferase type B catalytic subunit (hat-1) from Neurospora crassa (strain ATCC 24698 / 74-OR23-1A / CBS 708.71 / DSM 1257 / FGSC 987).